The following is a 247-amino-acid chain: Anamorsin homolog (247 aa).

An N-terminal SAM-like domain region spans residues 4 to 128; it reads FKGLQKSLYI…ETGSSARLSF (125 aa). Positions 129–160 are linker; sequence AKKNASALNVWKISGDDEELIDEEDLLDEEDK. Positions 171, 180, 183, and 185 each coordinate [2Fe-2S] cluster. Positions 171–185 are fe-S binding site A; it reads CSTTGKRKACKNCSC. The [4Fe-4S] cluster site is built by C208, C211, C219, and C222. 2 consecutive short sequence motifs (cx2C motif) follow at residues 208–211 and 219–222; these read CGNC and CSTC. The interval 208–222 is fe-S binding site B; that stretch reads CGNCYLGDAFRCSTC.

This sequence belongs to the anamorsin family. Monomer. Requires [2Fe-2S] cluster as cofactor. [4Fe-4S] cluster is required as a cofactor.

It is found in the cytoplasm. The protein localises to the mitochondrion intermembrane space. Functionally, component of the cytosolic iron-sulfur (Fe-S) protein assembly (CIA) machinery. Required for the maturation of extramitochondrial Fe-S proteins. Part of an electron transfer chain functioning in an early step of cytosolic Fe-S biogenesis, facilitating the de novo assembly of a [4Fe-4S] cluster on the cytosolic Fe-S scaffold complex. Electrons are transferred from NADPH via a FAD- and FMN-containing diflavin oxidoreductase. Together with the diflavin oxidoreductase, also required for the assembly of the diferric tyrosyl radical cofactor of ribonucleotide reductase (RNR), probably by providing electrons for reduction during radical cofactor maturation in the catalytic small subunit. This is Anamorsin homolog from Drosophila persimilis (Fruit fly).